The sequence spans 432 residues: Adenylosuccinate synthetase (432 aa).

Residues Gly13 to Lys19 and Gly41 to Thr43 each bind GTP. Residue Asp14 is the Proton acceptor of the active site. Residues Asp14 and Gly41 each contribute to the Mg(2+) site. IMP contacts are provided by residues Asp14–Lys17, Asn39–His42, Thr130, Arg144, Gln225, Thr240, and Arg304. Residue His42 is the Proton donor of the active site. Ala300–Arg306 is a substrate binding site. Residues Arg306, Lys332–Asp334, and Ser415–Gly417 contribute to the GTP site.

This sequence belongs to the adenylosuccinate synthetase family. In terms of assembly, homodimer. It depends on Mg(2+) as a cofactor.

The protein localises to the cytoplasm. It catalyses the reaction IMP + L-aspartate + GTP = N(6)-(1,2-dicarboxyethyl)-AMP + GDP + phosphate + 2 H(+). It functions in the pathway purine metabolism; AMP biosynthesis via de novo pathway; AMP from IMP: step 1/2. Its function is as follows. Plays an important role in the de novo pathway of purine nucleotide biosynthesis. Catalyzes the first committed step in the biosynthesis of AMP from IMP. The polypeptide is Adenylosuccinate synthetase (Salmonella choleraesuis (strain SC-B67)).